Consider the following 96-residue polypeptide: DNA-directed RNA polymerase subunit Rpo11 (96 aa).

Belongs to the archaeal Rpo11/eukaryotic RPB11/RPC19 RNA polymerase subunit family. As to quaternary structure, part of the RNA polymerase complex.

Its subcellular location is the cytoplasm. It catalyses the reaction RNA(n) + a ribonucleoside 5'-triphosphate = RNA(n+1) + diphosphate. In terms of biological role, DNA-dependent RNA polymerase (RNAP) catalyzes the transcription of DNA into RNA using the four ribonucleoside triphosphates as substrates. The protein is DNA-directed RNA polymerase subunit Rpo11 of Methanococcus maripaludis (strain DSM 14266 / JCM 13030 / NBRC 101832 / S2 / LL).